The primary structure comprises 424 residues: ATP-sensitive inward rectifier potassium channel 8 (424 aa).

The Cytoplasmic portion of the chain corresponds to 1-69 (MLARKSIIPE…IFTTLVDLKW (69 aa)). The residue at position 6 (serine 6) is a Phosphoserine. A helical transmembrane segment spans residues 70-94 (RHTLVIFTMSFLCSWLLFAIMWWLV). Residues 95 to 126 (AFAHGDIYAYMEKSGMEKSGLESTVCVTNVRS) are Extracellular-facing. The segment at residues 127–138 (FTSAFLFSIEVQ) is an intramembrane region (helical; Pore-forming). The pore-forming intramembrane region spans 139–145 (VTIGFGG). The Selectivity filter signature appears at 140–145 (TIGFGG). Residues 146-154 (RMMTEECPL) lie on the Extracellular side of the membrane. Residues 155-176 (AITVLILQNIVGLIINAVMLGC) form a helical membrane-spanning segment. Over 177–424 (IFMKTAQAHR…PEGNQNTSES (248 aa)) the chain is Cytoplasmic. The segment at 375-424 (SHQNSLRKRNSMRRNNSMRRNNSIRRNNSSLMVPKVQFMTPEGNQNTSES) is disordered. Positions 387 to 404 (RRNNSMRRNNSIRRNNSS) are enriched in low complexity.

The protein belongs to the inward rectifier-type potassium channel (TC 1.A.2.1) family. KCNJ8 subfamily. Interacts with ABCC9. In terms of tissue distribution, predominantly detected in fetal and adult heart.

Its subcellular location is the membrane. It catalyses the reaction K(+)(in) = K(+)(out). Its function is as follows. Inward rectifier potassium channels are characterized by a greater tendency to allow potassium to flow into the cell rather than out of it. Their voltage dependence is regulated by the concentration of extracellular potassium; as external potassium is raised, the voltage range of the channel opening shifts to more positive voltages. The inward rectification is mainly due to the blockage of outward current by internal magnesium. This channel is activated by internal ATP and can be blocked by external barium. Can form a sulfonylurea-sensitive but ATP-insensitive potassium channel with ABCC9. In Homo sapiens (Human), this protein is ATP-sensitive inward rectifier potassium channel 8 (KCNJ8).